The following is a 502-amino-acid chain: Cobyric acid synthase (502 aa).

A GATase cobBQ-type domain is found at 260 to 433; that stretch reads VLRVAVCAVP…WHGSLESDGF (174 aa). The active-site Nucleophile is Cys341. His425 is a catalytic residue.

The protein belongs to the CobB/CobQ family. CobQ subfamily.

It participates in cofactor biosynthesis; adenosylcobalamin biosynthesis. Its function is as follows. Catalyzes amidations at positions B, D, E, and G on adenosylcobyrinic A,C-diamide. NH(2) groups are provided by glutamine, and one molecule of ATP is hydrogenolyzed for each amidation. This Streptomyces coelicolor (strain ATCC BAA-471 / A3(2) / M145) protein is Cobyric acid synthase.